A 462-amino-acid polypeptide reads, in one-letter code: FAD-dependent monooxygenase opaC (462 aa).

N-linked (GlcNAc...) asparagine glycosylation is present at N10. The chain crosses the membrane as a helical span at residues 14 to 34 (ITVIIIGLGIGGLTAAISCHL). Residue D43 coordinates FAD. N-linked (GlcNAc...) asparagine glycosylation is present at N60. R115 lines the FAD pocket. Residue R193 is part of the active site. FAD contacts are provided by D322 and A335.

It belongs to the paxM FAD-dependent monooxygenase family. Requires FAD as cofactor.

Its subcellular location is the membrane. The protein operates within secondary metabolite biosynthesis. Functionally, FAD-dependent monooxygenase; part of the gene cluster that mediates the biosynthesis of oxepinamides, derivatives of anthranilyl-containing tripeptides that share an oxepin ring and a fused pyrimidinone moiety. The nonribosomal peptide synthetase (NRPS) opaA assembles the quinazolinone core with D-Phe incorporation. The first adenylation domain (A1) of opaA loads and activates anthranilic acid whereas the second A domain (A2) is for activating of L-Phe, which is then converted to D-form by the E domain. The third A domain (A3) is responsible for L-Ile activation and the terminal condensation domain C3 for cyclization and releasing the NRPS product protuboxepin K. The cytochrome P450 monooxygenase opaB then catalyzes alone the oxepin ring formation to convert protuboxepin K into protuboxepin A. The flavoenzyme opaC installs subsequently one hydroxyl group at the oxepin ring, accompanied by double bond migration, to form 15-epi-oxepinamide E. The epimerase opaE changes the D-Phe residue back to L-form, leading to oxepinamide E, which is further methylated at the hydroxyl group at C-12 by the O-methyltransferase OpaF to yield oxepinamide F. In Aspergillus ustus, this protein is FAD-dependent monooxygenase opaC.